The primary structure comprises 230 residues: Large ribosomal subunit protein uL1 (230 aa).

Belongs to the universal ribosomal protein uL1 family. As to quaternary structure, part of the 50S ribosomal subunit.

In terms of biological role, binds directly to 23S rRNA. The L1 stalk is quite mobile in the ribosome, and is involved in E site tRNA release. Functionally, protein L1 is also a translational repressor protein, it controls the translation of the L11 operon by binding to its mRNA. This is Large ribosomal subunit protein uL1 from Nitrobacter hamburgensis (strain DSM 10229 / NCIMB 13809 / X14).